Consider the following 119-residue polypeptide: Ribonuclease P protein component (119 aa).

It belongs to the RnpA family. As to quaternary structure, consists of a catalytic RNA component (M1 or rnpB) and a protein subunit.

It carries out the reaction Endonucleolytic cleavage of RNA, removing 5'-extranucleotides from tRNA precursor.. Its function is as follows. RNaseP catalyzes the removal of the 5'-leader sequence from pre-tRNA to produce the mature 5'-terminus. It can also cleave other RNA substrates such as 4.5S RNA. The protein component plays an auxiliary but essential role in vivo by binding to the 5'-leader sequence and broadening the substrate specificity of the ribozyme. This is Ribonuclease P protein component from Bifidobacterium longum (strain DJO10A).